Consider the following 458-residue polypeptide: Sulfite efflux pump SSU1 (458 aa).

The Cytoplasmic segment spans residues 1-11; it reads MVANWVLALTR. The chain crosses the membrane as a helical span at residues 12–32; that stretch reads QFDPFMFMMVMGVGISSNILY. The Extracellular portion of the chain corresponds to 33–48; that stretch reads SFPYPARWLRICSYIM. A helical membrane pass occupies residues 49–69; the sequence is FAIACLIFIAVQALQILHLIV. Topologically, residues 70–89 are cytoplasmic; that stretch reads YIKEKSFREYFNDFFRNMKH. The helical transmembrane segment at 90–110 threads the bilayer; that stretch reads NLFWGTYPMGLVTIINFLGAL. At 111–135 the chain is on the extracellular side; the sequence is SKANTTKSPTNARNLMIFVYVLWWY. A helical transmembrane segment spans residues 136 to 156; it reads DLAVCLVIAWGISFLIWHDYY. The Cytoplasmic portion of the chain corresponds to 157–176; it reads PLEGIGNYPSYNIKMASENM. Residues 177–197 form a helical membrane-spanning segment; sequence KSVLLLDIIPLVVVASSCGTF. The Extracellular portion of the chain corresponds to 198–220; it reads TMSEIFFHAFNRNIQLITLVICA. Residues 221-241 form a helical membrane-spanning segment; that stretch reads LTWLHAIIFVFILIAIYFWSL. The Cytoplasmic segment spans residues 242–252; it reads YINKIPPMTQV. The chain crosses the membrane as a helical span at residues 253 to 275; that stretch reads FTLFLLLGPMGQGSFGVLLLTDN. Topologically, residues 276–309 are extracellular; it reads IKKYAGKYYPTDNITREQEILTIAVPWCFKILGM. A helical membrane pass occupies residues 310-330; sequence VSAMALLAMGYFFTVISVVSI. Topologically, residues 331–350 are cytoplasmic; the sequence is LSYYNKKEIENETGKVKRVY. The helical transmembrane segment at 351 to 371 threads the bilayer; that stretch reads TFHKGFWGMTFPMGTMSLGNE. Over 372 to 387 the chain is Extracellular; that stretch reads ELYVQYNQYVPLYAFR. The chain crosses the membrane as a helical span at residues 388 to 408; that stretch reads VLGTIYGGVCVCWSILCLLCT. At 409-458 the chain is on the cytoplasmic side; sequence LHEYSKKMLHAARKSSLFSESGTEKTTVSPYNSIESVEESNSALDFTRLA. A phosphoserine mark is found at Ser-444, Ser-448, and Ser-450.

It belongs to the tellurite-resistance/dicarboxylate transporter (TDT) family.

Its subcellular location is the cell membrane. Functionally, involved in efflux of free sulfite. Mutations in the SSU1 gene cause sensitivity to sulfite. The polypeptide is Sulfite efflux pump SSU1 (SSU1) (Saccharomyces cerevisiae (strain ATCC 204508 / S288c) (Baker's yeast)).